We begin with the raw amino-acid sequence, 193 residues long: Ribonuclease HII (193 aa).

An RNase H type-2 domain is found at Cys-15–Cys-193. The a divalent metal cation site is built by Asp-21, Glu-22, and Asp-112.

The protein belongs to the RNase HII family. The cofactor is Mn(2+). Mg(2+) is required as a cofactor.

The protein resides in the cytoplasm. It catalyses the reaction Endonucleolytic cleavage to 5'-phosphomonoester.. Endonuclease that specifically degrades the RNA of RNA-DNA hybrids. The polypeptide is Ribonuclease HII (Rickettsia africae (strain ESF-5)).